The following is a 553-amino-acid chain: Zinc finger matrin-type protein 1 (553 aa).

The interval 16-36 (TPSSPAATCSGPMAGGDTSSN) is disordered. 4 consecutive Matrin-type zinc fingers follow at residues 61–91 (TFCK…KVRL), 125–155 (KFCG…KMRQ), 223–253 (KYCK…NQAR), and 275–305 (YVCP…KESM). Disordered stretches follow at residues 341–402 (QFRQ…DQRV) and 428–553 (HISR…ILGF). Over residues 350–362 (DSCDYEEEEEQEP) the composition is skewed to acidic residues. Residues 431–453 (RSPTSQDSSDNSSGSSSDESSGS) are compositionally biased toward low complexity. Residues 456 to 476 (KDKRRKRKHHRESRLRGSGRI) are compositionally biased toward basic residues. Positions 477–513 (RRGDENSEKRKRKGEDADSGKEDNKHDRGKTSGGDKD) are enriched in basic and acidic residues.

The protein localises to the nucleus. In Xenopus tropicalis (Western clawed frog), this protein is Zinc finger matrin-type protein 1 (zmat1).